We begin with the raw amino-acid sequence, 561 residues long: Cytosolic purine 5'-nucleotidase (561 aa).

The Nucleophile role is filled by Asp52. Positions 52 and 54 each coordinate GMP. IMP-binding residues include Asp52 and Asp54. The Mg(2+) site is built by Asp52 and Asp54. Asp54 acts as the Proton donor in catalysis. Position 144 (Arg144) interacts with (2R)-2,3-bisphosphoglycerate. Positions 144 and 154 each coordinate ATP. Residues Arg144 and Asn154 each contribute to the dATP site. Asn154 contacts adenosine. A P(1),P(4)-bis(5'-adenosyl) tetraphosphate-binding site is contributed by Asn154. GMP contacts are provided by Arg202, Asp206, Lys215, Thr249, and Asn250. Residues Arg202, Asp206, Lys215, Thr249, Asn250, Ser251, and Lys292 each coordinate IMP. GMP is bound at residue Lys292. Asp351 is a Mg(2+) binding site. Residue Lys362 participates in (2R)-2,3-bisphosphoglycerate binding. Lys362 is a binding site for P(1),P(4)-bis(5'-adenosyl) tetraphosphate. The residue at position 418 (Ser418) is a Phosphoserine. Met436 and Gln453 together coordinate adenosine. The ATP site is built by Gln453 and Arg456. 2 residues coordinate dATP: Gln453 and Arg456. Residue Gln453 participates in P(1),P(4)-bis(5'-adenosyl) tetraphosphate binding. Tyr457 contributes to the (2R)-2,3-bisphosphoglycerate binding site. Residue Tyr457 participates in P(1),P(4)-bis(5'-adenosyl) tetraphosphate binding. Phosphoserine is present on residues Ser502, Ser511, and Ser527. Residues 538 to 561 (PLAPQEITHCHDEDDDEEEEEEEE) are disordered. The segment at 548-561 (HDEDDDEEEEEEEE) is required for tetramer assembly. Acidic residues predominate over residues 550–561 (EDDDEEEEEEEE).

This sequence belongs to the 5'(3')-deoxyribonucleotidase family. As to quaternary structure, homotetramer. Mg(2+) is required as a cofactor. Widely expressed.

It localises to the cytoplasm. Its subcellular location is the cytosol. It catalyses the reaction a ribonucleoside 5'-phosphate + H2O = a ribonucleoside + phosphate. It carries out the reaction a 2'-deoxyribonucleoside + a ribonucleoside 5'-phosphate = a ribonucleoside + a 2'-deoxyribonucleoside 5'-phosphate. The enzyme catalyses IMP + H2O = inosine + phosphate. The catalysed reaction is GMP + H2O = guanosine + phosphate. It catalyses the reaction dIMP + H2O = 2'-deoxyinosine + phosphate. It carries out the reaction dGMP + H2O = 2'-deoxyguanosine + phosphate. The enzyme catalyses XMP + H2O = xanthosine + phosphate. The catalysed reaction is inosine + GMP = guanosine + IMP. It catalyses the reaction dGMP + inosine = 2'-deoxyguanosine + IMP. It carries out the reaction dIMP + inosine = 2'-deoxyinosine + IMP. The enzyme catalyses inosine + UMP = uridine + IMP. The catalysed reaction is inosine + CMP = cytidine + IMP. It catalyses the reaction inosine + AMP = IMP + adenosine. Allosterically activated by various compounds including ATP, 2,3-BPG/2,3-Bisphosphoglyceric acid and Ap4A/P1,P4-bis(5'-adenosyl) tetraphosphate. Binding of an allosteric activator is a prerequisiste to magnesium and substrate binding. Inhibited by inorganic phosphate. Broad specificity cytosolic 5'-nucleotidase that catalyzes the dephosphorylation of 6-hydroxypurine nucleoside 5'-monophosphates. In addition, possesses a phosphotransferase activity by which it can transfer a phosphate from a donor nucleoside monophosphate to an acceptor nucleoside, preferably inosine, deoxyinosine and guanosine. Has the highest activities for IMP and GMP followed by dIMP, dGMP and XMP. Could also catalyze the transfer of phosphates from pyrimidine monophosphates but with lower efficiency. Through these activities regulates the purine nucleoside/nucleotide pools within the cell. The protein is Cytosolic purine 5'-nucleotidase of Homo sapiens (Human).